We begin with the raw amino-acid sequence, 883 residues long: Phosphoenolpyruvate carboxylase (883 aa).

Catalysis depends on residues histidine 141 and lysine 547.

The protein belongs to the PEPCase type 1 family. It depends on Mg(2+) as a cofactor.

It carries out the reaction oxaloacetate + phosphate = phosphoenolpyruvate + hydrogencarbonate. Functionally, forms oxaloacetate, a four-carbon dicarboxylic acid source for the tricarboxylic acid cycle. This chain is Phosphoenolpyruvate carboxylase, found in Chromohalobacter salexigens (strain ATCC BAA-138 / DSM 3043 / CIP 106854 / NCIMB 13768 / 1H11).